The following is an 86-amino-acid chain: Large ribosomal subunit protein bL27 (86 aa).

The segment at 1–24 is disordered; the sequence is MAHKKAGGSSRNGRDSEGRRLGVK.

It belongs to the bacterial ribosomal protein bL27 family.

The chain is Large ribosomal subunit protein bL27 from Magnetococcus marinus (strain ATCC BAA-1437 / JCM 17883 / MC-1).